Reading from the N-terminus, the 626-residue chain is tRNA uridine 5-carboxymethylaminomethyl modification enzyme MnmG (626 aa).

13–18 lines the FAD pocket; sequence GGGHAG. Residue 273-287 participates in NAD(+) binding; the sequence is GPRYCPSIEDKIHRF.

Belongs to the MnmG family. In terms of assembly, homodimer. Heterotetramer of two MnmE and two MnmG subunits. Requires FAD as cofactor.

Its subcellular location is the cytoplasm. In terms of biological role, NAD-binding protein involved in the addition of a carboxymethylaminomethyl (cmnm) group at the wobble position (U34) of certain tRNAs, forming tRNA-cmnm(5)s(2)U34. The sequence is that of tRNA uridine 5-carboxymethylaminomethyl modification enzyme MnmG from Acinetobacter baumannii (strain ACICU).